The chain runs to 339 residues: Nicotinate-nucleotide--dimethylbenzimidazole phosphoribosyltransferase (339 aa).

The active-site Proton acceptor is the Glu306.

The protein belongs to the CobT family.

The catalysed reaction is 5,6-dimethylbenzimidazole + nicotinate beta-D-ribonucleotide = alpha-ribazole 5'-phosphate + nicotinate + H(+). The protein operates within nucleoside biosynthesis; alpha-ribazole biosynthesis; alpha-ribazole from 5,6-dimethylbenzimidazole: step 1/2. Functionally, catalyzes the synthesis of alpha-ribazole-5'-phosphate from nicotinate mononucleotide (NAMN) and 5,6-dimethylbenzimidazole (DMB). In Brucella melitensis biotype 1 (strain ATCC 23456 / CCUG 17765 / NCTC 10094 / 16M), this protein is Nicotinate-nucleotide--dimethylbenzimidazole phosphoribosyltransferase.